Here is a 600-residue protein sequence, read N- to C-terminus: Autophagy-related protein 22-2 (600 aa).

The segment at Met1–Thr30 is disordered. 4 helical membrane passes run Tyr41–Leu61, Ser117–Phe137, Thr149–Ile168, and Cys186–Pro206. Residues Ser234–Ser257 are disordered. 4 helical membrane-spanning segments follow: residues Gly271–Phe291, Thr304–Val324, Val378–Thr398, and Val414–Ile434. N-linked (GlcNAc...) asparagine glycosylation is present at Asn444. Transmembrane regions (helical) follow at residues Val449–Phe469, Tyr484–Gly506, Lys526–Val546, and Gly549–Ala569.

This sequence belongs to the ATG22 family.

The protein resides in the vacuole membrane. In terms of biological role, vacuolar effluxer which mediate the efflux of amino acids resulting from autophagic degradation. The release of autophagic amino acids allows the maintenance of protein synthesis and viability during nitrogen starvation. The sequence is that of Autophagy-related protein 22-2 (atg22-2) from Aspergillus niger (strain ATCC MYA-4892 / CBS 513.88 / FGSC A1513).